Consider the following 303-residue polypeptide: Bifunctional protein FolD (303 aa).

Residues 175–177 (GVS) and Ile-243 each bind NADP(+).

The protein belongs to the tetrahydrofolate dehydrogenase/cyclohydrolase family. Homodimer.

The catalysed reaction is (6R)-5,10-methylene-5,6,7,8-tetrahydrofolate + NADP(+) = (6R)-5,10-methenyltetrahydrofolate + NADPH. It carries out the reaction (6R)-5,10-methenyltetrahydrofolate + H2O = (6R)-10-formyltetrahydrofolate + H(+). It participates in one-carbon metabolism; tetrahydrofolate interconversion. Its function is as follows. Catalyzes the oxidation of 5,10-methylenetetrahydrofolate to 5,10-methenyltetrahydrofolate and then the hydrolysis of 5,10-methenyltetrahydrofolate to 10-formyltetrahydrofolate. The sequence is that of Bifunctional protein FolD from Xanthomonas oryzae pv. oryzae (strain PXO99A).